A 245-amino-acid polypeptide reads, in one-letter code: MPRYKLLIEYDGTPFCGWQYQDNGPSVQGALEDAVAALAGTHVRVHGAGRTDAGVHALGQVAHIDLEKSYRTDQVRDALNAHLRPHPIGVLSAEIVPETFESRFSAVKRHYIYRISNRRANLALDLHRAWRIARTLDVAAMHEAAQVLVGRHDFTTFRDTECQAKSPEKTLDQLDVTREGDAVSIVTSARSFLHSQVRSMVGSLVWVGHGRWTIADMRNALAARDRTACGPVAPPEGLYLVRVDY.

Asp-52 functions as the Nucleophile in the catalytic mechanism. Tyr-111 is a substrate binding site.

The protein belongs to the tRNA pseudouridine synthase TruA family. As to quaternary structure, homodimer.

It carries out the reaction uridine(38/39/40) in tRNA = pseudouridine(38/39/40) in tRNA. Functionally, formation of pseudouridine at positions 38, 39 and 40 in the anticodon stem and loop of transfer RNAs. The chain is tRNA pseudouridine synthase A from Afipia carboxidovorans (strain ATCC 49405 / DSM 1227 / KCTC 32145 / OM5) (Oligotropha carboxidovorans).